The primary structure comprises 237 residues: Class B acid phosphatase (237 aa).

The signal sequence occupies residues 1–23 (MKKITLALSAVCLLFTLNHSANA). Asp69 functions as the Nucleophile in the catalytic mechanism. Residues Asp69 and Asp71 each coordinate Mg(2+). The Proton donor role is filled by Asp71. Residues 137–138 (TG) and Lys177 contribute to the substrate site. Asp192 serves as a coordination point for Mg(2+).

The protein belongs to the class B bacterial acid phosphatase family. In terms of assembly, homotetramer. Mg(2+) is required as a cofactor.

The protein resides in the periplasm. The catalysed reaction is a phosphate monoester + H2O = an alcohol + phosphate. Nucleosides, and particularly 2'-deoxyribonucleosides, are potent inhibitors of the phosphatase activity. The phosphatase activity is also inhibited by inorganic phosphate and EDTA in vitro. Dephosphorylates several organic phosphate monoesters such as 3'-UMP, 5'-UMP and pNPP. Also has a phosphotransferase activity catalyzing the transfer of low-energy phosphate groups from organic phosphate monoesters to free hydroxyl groups of various organic compounds such as the 2'-, 3-, or 5'-hydroxyls of nucleosides and nucleotides. Also displays significant phosphomutase activity since it is able to catalyze the transfer of the phosphate group of 3'-AMP from the 3'-position both to the 2'- and 5'-positions. One of the physiological functions of the phosphohydrolytic activity of the enzyme is believed to be the scavenging of organic phosphate esters that otherwise cannot pass the cytoplasmic membrane. This chain is Class B acid phosphatase (aphA), found in Salmonella typhimurium (strain LT2 / SGSC1412 / ATCC 700720).